Here is a 90-residue protein sequence, read N- to C-terminus: Probable dynein light chain 2, cytoplasmic (90 aa).

Belongs to the dynein light chain family.

It localises to the cytoplasm. The protein resides in the cytoskeleton. In terms of biological role, acts as one of several non-catalytic accessory components of a dynein complex. The protein is Probable dynein light chain 2, cytoplasmic (dlc-2) of Caenorhabditis elegans.